A 249-amino-acid chain; its full sequence is Isoprenyl transferase (249 aa).

Aspartate 29 is an active-site residue. Aspartate 29 provides a ligand contact to Mg(2+). Residues 30–33 (GNGR), tryptophan 34, arginine 42, histidine 46, and 74–76 (STE) each bind substrate. Catalysis depends on asparagine 77, which acts as the Proton acceptor. Substrate-binding positions include tryptophan 78, arginine 80, arginine 197, and 203-205 (RLS). Residue glutamate 216 coordinates Mg(2+).

Belongs to the UPP synthase family. As to quaternary structure, homodimer. Mg(2+) is required as a cofactor.

Its function is as follows. Catalyzes the condensation of isopentenyl diphosphate (IPP) with allylic pyrophosphates generating different type of terpenoids. This is Isoprenyl transferase from Trichormus variabilis (strain ATCC 29413 / PCC 7937) (Anabaena variabilis).